Reading from the N-terminus, the 396-residue chain is Pre-mycofactocin synthase (396 aa).

In terms of domain architecture, FMN hydroxy acid dehydrogenase spans 1-383 (MAEAWFETVA…SPADILVPTG (383 aa)). FMN is bound by residues Ser108, Gln128, Thr156, and Lys254. The active-site Proton acceptor is the His278. FMN is bound by residues 309–313 (DGGIR) and 332–333 (GR).

Belongs to the FMN-dependent alpha-hydroxy acid dehydrogenase family. The cofactor is FMN.

It catalyses the reaction 3-amino-5-[(4-hydroxyphenyl)methyl]-4,4-dimethyl-2-pyrrolidin-2-one + O2 + H2O = pre-mycofactocin + H2O2 + NH4(+). Its function is as follows. Involved in the biosynthesis of the enzyme cofactor mycofactocin (MFT). Catalyzes the oxidative deamination of AHDP (3-amino-5-[(4-hydroxyphenyl)methyl]-4,4-dimethyl-2-pyrrolidin-2-one), forming an alpha-keto amide moiety on the resulting molecule, which is called pre-mycofactocin (PMFT). This reaction occurs via a 5-[(4-hydroxyphenyl)methyl]-3-imino-4,4-dimethylpyrrolidin-2-one intermediate, which converts to PMFT. The alpha-keto amide moiety is the redox-active center for the redox activity of mycofactocin. The polypeptide is Pre-mycofactocin synthase (mftD) (Mycobacterium tuberculosis (strain CDC 1551 / Oshkosh)).